Reading from the N-terminus, the 393-residue chain is S-adenosylmethionine decarboxylase proenzyme (393 aa).

Residues glutamate 11 and glutamate 14 contribute to the active site. Catalysis depends on serine 71, which acts as the Schiff-base intermediate with substrate; via pyruvic acid. Serine 71 carries the pyruvic acid (Ser); by autocatalysis modification. The active-site Proton donor; for catalytic activity is the cysteine 85. Catalysis depends on proton acceptor; for processing activity residues serine 236 and histidine 249.

The protein belongs to the eukaryotic AdoMetDC family. Pyruvate is required as a cofactor. Post-translationally, is synthesized initially as an inactive proenzyme. Formation of the active enzyme involves a self-maturation process in which the active site pyruvoyl group is generated from an internal serine residue via an autocatalytic post-translational modification. Two non-identical subunits are generated from the proenzyme in this reaction, and the pyruvate is formed at the N-terminus of the alpha chain, which is derived from the carboxyl end of the proenzyme. The post-translation cleavage follows an unusual pathway, termed non-hydrolytic serinolysis, in which the side chain hydroxyl group of the serine supplies its oxygen atom to form the C-terminus of the beta chain, while the remainder of the serine residue undergoes an oxidative deamination to produce ammonia and the pyruvoyl group blocking the N-terminus of the alpha chain.

It carries out the reaction S-adenosyl-L-methionine + H(+) = S-adenosyl 3-(methylsulfanyl)propylamine + CO2. The protein operates within amine and polyamine biosynthesis; S-adenosylmethioninamine biosynthesis; S-adenosylmethioninamine from S-adenosyl-L-methionine: step 1/1. This Hordeum chilense (Barley) protein is S-adenosylmethionine decarboxylase proenzyme (SAMDC).